The chain runs to 661 residues: MDGLVAQCSARLLQQEKEIKSLTAEIDRLKNCGHLEDSPSLDQLREENLKLKYRLNILQRSLQAEKRRRPTKNMININSRLQDVFGCAIKAAYPDLDNPPLVVTPSQQPKFGDYQCNSAMGISQMLKAKEQKVNPRGIAENITKHLPNNEYIDRVEIAGPGFINVHLRKDFVSEQLTNLLVNGIQLPALGENKKVIVDFSSPNIAKEMHVGHLRSTIIGESMSRLFEFAGYDVLRLNHVGDWGTQFGMLIAHLQDQFPDYLTVSPPIGDLQAFYKESKKRFDTEEEFKKRAYQCVVSLQSKDPDFIKAWNLICDVSRAEFNKIYDALDITLIERGESFYQDRMKDIVKEFEDKGYVQVDDGRKIVFVPGCSIPLTIVKSDGGFTYDTSDLAAIKQRLFEEKANKIIYVVDNGQAVHFQTIFAAAQMIGWYDPKVTQVTHVGFGVVLGEDKKKFKTRSGETVRLVDLLGEGLKRSMDKLKEKERDKVLTEEELTAAQTSIAYGCIKYADLSHNRLNDYIFSFDKMLDDRGNTAAYLLYAFTRIRSIARLANVDEEMLQKAARETKIVLDHEKEWKLGRCILRFPEILQKMLDDLFLHTLCDYIYELATTFTEFYDSCYCVEKDRQTGKVLKVNMWRMLLCEAVAAVMAKGFDILGIKPVQRM.

An N-acetylmethionine modification is found at M1. Residues 1–73 (MDGLVAQCSA…AEKRRRPTKN (73 aa)) form a could be involved in the assembly of the multisynthetase complex region. Residues 201–203 (SPN), H212, Y385, D389, and Q413 each bind L-arginine. The short motif at 202 to 213 (PNIAKEMHVGHL) is the 'HIGH' region element. The tract at residues 530-544 (NTAAYLLYAFTRIRS) is interaction with tRNA.

The protein belongs to the class-I aminoacyl-tRNA synthetase family. In terms of assembly, interacts (via N-terminus) with AIMP1 (via N-terminus); this stimulates its catalytic activity. Interacts (via N-terminus) with LARS2 (via C-terminus). Monomer. Part of a multisubunit complex that groups tRNA ligases for Arg (RARS1), Asp (DARS1), Gln (QARS1), Ile (IARS1), Leu (LARS1), Lys (KARS1), Met (MARS1) the bifunctional ligase for Glu and Pro (EPRS1) and the auxiliary subunits AIMP1/p43, AIMP2/p38 and EEF1E1/p18. Interacts with QARS1. Part of a complex composed of RARS1, QARS1 and AIMP1.

The protein localises to the cytoplasm. The protein resides in the cytosol. It catalyses the reaction tRNA(Arg) + L-arginine + ATP = L-arginyl-tRNA(Arg) + AMP + diphosphate. Its function is as follows. Forms part of a macromolecular complex that catalyzes the attachment of specific amino acids to cognate tRNAs during protein synthesis. Modulates the secretion of AIMP1 and may be involved in generation of the inflammatory cytokine EMAP2 from AIMP1. This Cricetulus griseus (Chinese hamster) protein is Arginine--tRNA ligase, cytoplasmic (RARS1).